Consider the following 890-residue polypeptide: Leucine--tRNA ligase (890 aa).

Positions 48 to 58 (PYPSGKLHMGH) match the 'HIGH' region motif. Residues 645–649 (KMSKS) carry the 'KMSKS' region motif. Lys-648 serves as a coordination point for ATP.

Belongs to the class-I aminoacyl-tRNA synthetase family.

It localises to the cytoplasm. It catalyses the reaction tRNA(Leu) + L-leucine + ATP = L-leucyl-tRNA(Leu) + AMP + diphosphate. In Polynucleobacter necessarius subsp. necessarius (strain STIR1), this protein is Leucine--tRNA ligase.